The following is a 612-amino-acid chain: Dihydroxy-acid dehydratase (612 aa).

D81 provides a ligand contact to Mg(2+). Residue C122 coordinates [2Fe-2S] cluster. Mg(2+) contacts are provided by D123 and K124. The residue at position 124 (K124) is an N6-carboxylysine. Position 193 (C193) interacts with [2Fe-2S] cluster. E489 serves as a coordination point for Mg(2+). S515 acts as the Proton acceptor in catalysis.

This sequence belongs to the IlvD/Edd family. Homodimer. It depends on [2Fe-2S] cluster as a cofactor. The cofactor is Mg(2+).

The enzyme catalyses (2R)-2,3-dihydroxy-3-methylbutanoate = 3-methyl-2-oxobutanoate + H2O. It catalyses the reaction (2R,3R)-2,3-dihydroxy-3-methylpentanoate = (S)-3-methyl-2-oxopentanoate + H2O. It functions in the pathway amino-acid biosynthesis; L-isoleucine biosynthesis; L-isoleucine from 2-oxobutanoate: step 3/4. It participates in amino-acid biosynthesis; L-valine biosynthesis; L-valine from pyruvate: step 3/4. Functions in the biosynthesis of branched-chain amino acids. Catalyzes the dehydration of (2R,3R)-2,3-dihydroxy-3-methylpentanoate (2,3-dihydroxy-3-methylvalerate) into 2-oxo-3-methylpentanoate (2-oxo-3-methylvalerate) and of (2R)-2,3-dihydroxy-3-methylbutanoate (2,3-dihydroxyisovalerate) into 2-oxo-3-methylbutanoate (2-oxoisovalerate), the penultimate precursor to L-isoleucine and L-valine, respectively. This is Dihydroxy-acid dehydratase from Xanthomonas oryzae pv. oryzae (strain MAFF 311018).